The primary structure comprises 949 residues: Thrombospondin-4-B (949 aa).

Residues 1-22 (MAGTMHLLTAVSLILMLSSANA) form the signal peptide. In terms of domain architecture, Laminin G-like spans 23 to 198 (ESTVYNLLTS…LEELKLAYGD (176 aa)). Intrachain disulfides connect Cys276–Cys287, Cys281–Cys296, Cys299–Cys310, Cys316–Cys327, Cys321–Cys336, Cys339–Cys363, Cys369–Cys383, Cys377–Cys392, Cys395–Cys407, Cys413–Cys427, Cys421–Cys437, Cys439–Cys450, Cys466–Cys471, Cys476–Cys496, Cys512–Cys532, Cys535–Cys555, Cys571–Cys591, Cys594–Cys614, Cys632–Cys652, Cys672–Cys692, and Cys708–Cys929. The 38-residue stretch at 312-349 (DVDECQFNPCFPGVRCVNMAPGFRCEACPLGFTGKPLE) folds into the EGF-like 1; calcium-binding domain. The EGF-like 2; calcium-binding domain occupies 365-408 (DIDECKGPDNGGCTANSICVNSVGSYQCGRCKTGFTGDQIRGCK). In terms of domain architecture, EGF-like 3 spans 409 to 451 (PEKSCGNRLQNPCDPNAQCTEERDGTITCQCGIGWAGNGYLCG). TSP type-3 repeat units lie at residues 452–484 (KDTD…NSGQ), 485–520 (EDAD…NINQ), 521–543 (QNSD…NPDQ), 544–579 (RDTD…NRDQ), 580–602 (LDRD…NPNQ), 603–640 (SDID…NSSQ), 641–680 (LDTD…NPEQ), and 681–716 (IDDN…EITL). Positions 578–671 (DQLDRDGDGV…PDSLPPGPDN (94 aa)) are disordered. N-linked (GlcNAc...) asparagine glycans are attached at residues Asn601 and Asn637. Residues 649–660 (GDECDDDDDNDG) show a composition bias toward acidic residues. Residues 720 to 934 (RAYQTVVLDP…LKYRCNDTIP (215 aa)) enclose the TSP C-terminal domain. Residue Asn930 is glycosylated (N-linked (GlcNAc...) asparagine).

It belongs to the thrombospondin family. In terms of assembly, homotrimer; disulfide-linked.

The protein resides in the endoplasmic reticulum. It is found in the sarcoplasmic reticulum. The protein localises to the secreted. It localises to the extracellular space. Its subcellular location is the extracellular matrix. Functionally, adhesive glycoprotein that mediates cell-to-cell and cell-to-matrix interactions and may be involved in various processes including cellular proliferation, migration, adhesion and attachment. May play a role in ER stress response. The sequence is that of Thrombospondin-4-B (thbs4b) from Danio rerio (Zebrafish).